The following is a 415-amino-acid chain: Serine hydroxymethyltransferase (415 aa).

(6S)-5,6,7,8-tetrahydrofolate-binding positions include L121 and 125–127 (GHL). Position 229 is an N6-(pyridoxal phosphate)lysine (K229).

It belongs to the SHMT family. In terms of assembly, homodimer. Requires pyridoxal 5'-phosphate as cofactor.

The protein localises to the cytoplasm. It catalyses the reaction (6R)-5,10-methylene-5,6,7,8-tetrahydrofolate + glycine + H2O = (6S)-5,6,7,8-tetrahydrofolate + L-serine. The protein operates within one-carbon metabolism; tetrahydrofolate interconversion. It functions in the pathway amino-acid biosynthesis; glycine biosynthesis; glycine from L-serine: step 1/1. In terms of biological role, catalyzes the reversible interconversion of serine and glycine with tetrahydrofolate (THF) serving as the one-carbon carrier. This reaction serves as the major source of one-carbon groups required for the biosynthesis of purines, thymidylate, methionine, and other important biomolecules. Also exhibits THF-independent aldolase activity toward beta-hydroxyamino acids, producing glycine and aldehydes, via a retro-aldol mechanism. This Bordetella petrii (strain ATCC BAA-461 / DSM 12804 / CCUG 43448) protein is Serine hydroxymethyltransferase.